The primary structure comprises 131 residues: Small ribosomal subunit protein eS8 (131 aa).

The tract at residues P15 to P36 is disordered. Basic residues predominate over residues G17–A30.

It belongs to the eukaryotic ribosomal protein eS8 family. In terms of assembly, part of the 30S ribosomal subunit.

In Pyrobaculum calidifontis (strain DSM 21063 / JCM 11548 / VA1), this protein is Small ribosomal subunit protein eS8.